Reading from the N-terminus, the 131-residue chain is Small ribosomal subunit protein eS24 (131 aa).

Positions 93–131 (RHGLYEKKKTSRKQRKERKNRMKKVRGTKKASVGAAGKK) are disordered. Positions 101–121 (KTSRKQRKERKNRMKKVRGTK) are enriched in basic residues.

This sequence belongs to the eukaryotic ribosomal protein eS24 family. As to quaternary structure, component of the small ribosomal subunit. Part of the small subunit (SSU) processome, composed of more than 70 proteins and the RNA chaperone small nucleolar RNA (snoRNA) U3.

Its subcellular location is the cytoplasm. It localises to the nucleus. The protein localises to the nucleolus. Its function is as follows. Component of the small ribosomal subunit. The ribosome is a large ribonucleoprotein complex responsible for the synthesis of proteins in the cell. Required for processing of pre-rRNA and maturation of 40S ribosomal subunits. Part of the small subunit (SSU) processome, first precursor of the small eukaryotic ribosomal subunit. During the assembly of the SSU processome in the nucleolus, many ribosome biogenesis factors, an RNA chaperone and ribosomal proteins associate with the nascent pre-rRNA and work in concert to generate RNA folding, modifications, rearrangements and cleavage as well as targeted degradation of pre-ribosomal RNA by the RNA exosome. The protein is Small ribosomal subunit protein eS24 (rps24) of Ictalurus punctatus (Channel catfish).